The sequence spans 323 residues: Phosphoribosylformylglycinamidine cyclo-ligase (323 aa).

It belongs to the AIR synthase family.

The protein localises to the cytoplasm. It carries out the reaction 2-formamido-N(1)-(5-O-phospho-beta-D-ribosyl)acetamidine + ATP = 5-amino-1-(5-phospho-beta-D-ribosyl)imidazole + ADP + phosphate + H(+). The protein operates within purine metabolism; IMP biosynthesis via de novo pathway; 5-amino-1-(5-phospho-D-ribosyl)imidazole from N(2)-formyl-N(1)-(5-phospho-D-ribosyl)glycinamide: step 2/2. The polypeptide is Phosphoribosylformylglycinamidine cyclo-ligase (Saccharolobus solfataricus (strain ATCC 35092 / DSM 1617 / JCM 11322 / P2) (Sulfolobus solfataricus)).